Here is a 170-residue protein sequence, read N- to C-terminus: Photosystem II extrinsic protein V (170 aa).

Positions 1-33 (MASLFASLGRSLIKLLIVLPVIIGLSISSPAMA) are cleaved as a signal peptide. Heme c is bound by residues cysteine 70, cysteine 73, histidine 74, and histidine 125.

Belongs to the cytochrome c family. PsbV subfamily. In terms of assembly, PSII is composed of 1 copy each of membrane proteins PsbA, PsbB, PsbC, PsbD, PsbE, PsbF, PsbH, PsbI, PsbJ, PsbK, PsbL, PsbM, PsbT, PsbX, PsbY, Psb30/Ycf12, peripheral proteins PsbO, CyanoQ (PsbQ), PsbU, PsbV and a large number of cofactors. It forms dimeric complexes. It depends on heme c as a cofactor.

The protein resides in the cellular thylakoid membrane. One of the extrinsic, lumenal subunits of photosystem II (PSII). PSII is a light-driven water plastoquinone oxidoreductase, using light energy to abstract electrons from H(2)O, generating a proton gradient subsequently used for ATP formation. The extrinsic proteins stabilize the structure of photosystem II oxygen-evolving complex (OEC), the ion environment of oxygen evolution and protect the OEC against heat-induced inactivation. Low-potential cytochrome c that plays a role in the OEC of PSII. The protein is Photosystem II extrinsic protein V of Prochlorococcus marinus (strain MIT 9313).